The sequence spans 573 residues: MARAVGPERRLLAVYTGGTIGMRSELGVLVPGTGLAAILRTLPMFHDEEHARARGLSEDTLVLPPASRNQRILYTVLECQPLFDSSDMTIAEWVCLAQTIKRHYEQYHGFVVIHGTDTMAFAASMLSFMLENLQKTVILTGAQVPIHALWSDGRENLLGALLMAGQYVIPEVCLFFQNQLFRGNRATKVDARRFAAFCSPNLLPLATVGADITINRELVRKVDGKAGLVVHSSMEQDVGLLRLYPGIPAALVRAFLQPPLKGVVMETFGSGNGPTKPDLLQELRVATERGLVIVNCTHCLQGAVTTDYAAGMAMAGAGVISGFDMTSEAALAKLSYVLGQPGLSLDVRKELLTKDLRGEMTPPSVEERRPSLQGNTLGGGVSWLLSLSGSQEADALRNALVPSLACAAAHAGDVEALQALVELGSDLGLVDFNGQTPLHAAARGGHTEAVTMLLQRGVDVNTRDTDGFSPLLLAVRGRHPGVIGLLREAGASLSTQELEEAGTELCRLAYRADLEGLQVWWQAGADLGQPGYDGHSALHVAEAAGNLAVVAFLQSLEGAVGAQAPCPEVLPGV.

The Asparaginase/glutaminase domain maps to 9 to 355; that stretch reads RRLLAVYTGG…DVRKELLTKD (347 aa). Thr-19 (acyl-ester intermediate) is an active-site residue. The tract at residues 41–350 is asparaginase; sequence TLPMFHDEEH…PGLSLDVRKE (310 aa). Residues 84-86 and 116-117 contribute to the substrate site; these read DSS and TD. 5 ANK repeats span residues 141–170, 399–429, 433–462, 466–495, and 533–562; these read GAQVPIHALWSDGRENLLGALLMAGQYVIP, ALVPSLACAAAHAGDVEALQALVELGSDLGL, NGQTPLHAAARGGHTEAVTMLLQRGVDVNT, DGFSPLLLAVRGRHPGVIGLLREAGASLST, and DGHSALHVAEAAGNLAVVAFLQSLEGAVGA.

In the N-terminal section; belongs to the asparaginase 1 family. Monomer.

It carries out the reaction a 1-acyl-sn-glycero-3-phosphocholine + H2O = sn-glycerol 3-phosphocholine + a fatty acid + H(+). It catalyses the reaction L-asparagine + H2O = L-aspartate + NH4(+). The catalysed reaction is a 1-O-alkyl-2-acetyl-sn-glycero-3-phosphocholine + H2O = a 1-O-alkyl-sn-glycero-3-phosphocholine + acetate + H(+). The enzyme catalyses 1-hexadecanoyl-sn-glycero-3-phosphocholine + H2O = sn-glycerol 3-phosphocholine + hexadecanoate + H(+). It carries out the reaction 2 1-hexadecanoyl-sn-glycero-3-phosphocholine = 1,2-dihexadecanoyl-sn-glycero-3-phosphocholine + sn-glycerol 3-phosphocholine. It catalyses the reaction 1-octadecanoyl-sn-glycero-3-phosphocholine + H2O = octadecanoate + sn-glycerol 3-phosphocholine + H(+). The catalysed reaction is 1-(9Z-octadecenoyl)-sn-glycero-3-phosphocholine + H2O = sn-glycerol 3-phosphocholine + (9Z)-octadecenoate + H(+). The enzyme catalyses 1-hexadecanoyl-sn-glycero-3-phosphoethanolamine + H2O = sn-glycero-3-phosphoethanolamine + hexadecanoate + H(+). It carries out the reaction 1-(9Z-octadecenoyl)-sn-glycero-3-phosphoethanolamine + H2O = sn-glycero-3-phosphoethanolamine + (9Z)-octadecenoate + H(+). It catalyses the reaction 1-hexadecanoyl-sn-glycero-3-phosphoethanolamine + 1-hexadecanoyl-sn-glycero-3-phosphocholine = 1,2-dihexadecanoyl-sn-glycero-3-phosphoethanolamine + sn-glycerol 3-phosphocholine. The catalysed reaction is 2-(5Z,8Z,11Z,14Z)-eicosatetraenoyl-sn-glycero-3-phosphocholine + H2O = sn-glycerol 3-phosphocholine + (5Z,8Z,11Z,14Z)-eicosatetraenoate + H(+). The enzyme catalyses 2-hexadecanoyl-sn-glycero-3-phosphocholine + H2O = sn-glycerol 3-phosphocholine + hexadecanoate + H(+). It carries out the reaction 2 2-hexadecanoyl-sn-glycero-3-phosphocholine = 1,2-dihexadecanoyl-sn-glycero-3-phosphocholine + sn-glycerol 3-phosphocholine. It catalyses the reaction 1-O-(9Z)-octadecenoyl-2-O-acetyl-sn-glycero-3-phosphocholine + H2O = 2-acetyl-sn-glycero-3-phosphocholine + (9Z)-octadecenoate + H(+). The catalysed reaction is a 1-acyl-sn-glycero-3-phospho-(1D-myo-inositol) + 1-hexadecanoyl-sn-glycero-3-phosphocholine = a 1-acyl-2-hexadecanoyl-sn-glycero-3-phospho-(1D-myo-inositol) + sn-glycerol 3-phosphocholine. The enzyme catalyses 2 2-(5Z,8Z,11Z,14Z)-eicosatetraenoyl-sn-glycero-3-phosphocholine = 1,2-di-(5Z,8Z,11Z,14Z-eicosatetraenoyl)-sn-glycero-3-phosphocholine + sn-glycerol 3-phosphocholine. Functionally, exhibits lysophospholipase, transacylase, PAF acetylhydrolase and asparaginase activities. Can catalyze three types of transacylation reactions: (1) acyl transfer from 1-acyl-sn-glycero-3-phosphocholine (1-acyl-GPC) to the sn-1(3) positions of glycerol and 2-acylglycerol (sn-1 to -1(3) transfer), (2) acyl transfer from 1-acyl-GPC to the sn-2 positions of 1-acyl-GPC, 1-acyl-sn-glycero-3-phosphoethanolamine (1-acyl-GPE), and other lysophospholipids (sn-1 to -2 transfer) and (3) acyl transfer from 2-acyl-GPC to the sn-1 position of 2-acyl-GPC and 2-acyl-GPE (sn-2 to -1 transfer). Mediates the synthesis of 1-arachidonoyl species of phospholipids by transferring the arachidonoyl residue from 2-arachidonoyl lysophospholipid to the sn-1 position of 2-acyl lysophospholipid. This chain is 60 kDa lysophospholipase (ASPG), found in Homo sapiens (Human).